Here is a 188-residue protein sequence, read N- to C-terminus: Elongation factor P (188 aa).

Belongs to the elongation factor P family.

It localises to the cytoplasm. It participates in protein biosynthesis; polypeptide chain elongation. Its function is as follows. Involved in peptide bond synthesis. Stimulates efficient translation and peptide-bond synthesis on native or reconstituted 70S ribosomes in vitro. Probably functions indirectly by altering the affinity of the ribosome for aminoacyl-tRNA, thus increasing their reactivity as acceptors for peptidyl transferase. This chain is Elongation factor P, found in Phytoplasma mali (strain AT).